The chain runs to 219 residues: Auxin-responsive protein IAA24 (219 aa).

Residues 24–28 (LCLRL) carry the EAR-like (transcriptional repression) motif. Disordered stretches follow at residues 24–88 (LCLR…AKAQ) and 109–128 (AAAATKKGGDEKQKQQQQGG). Residues 60–71 (STDSMASGTGTS) are compositionally biased toward polar residues. In terms of domain architecture, PB1 spans 129-215 (GLYVKVSMDG…SCKKLRIMKG (87 aa)).

This sequence belongs to the Aux/IAA family. As to quaternary structure, homodimers and heterodimers. In terms of tissue distribution, highly expressed in flowers. Expressed in seedlings.

It is found in the nucleus. In terms of biological role, aux/IAA proteins are short-lived transcriptional factors that function as repressors of early auxin response genes at low auxin concentrations. This Oryza sativa subsp. japonica (Rice) protein is Auxin-responsive protein IAA24 (IAA24).